The following is a 142-amino-acid chain: Large ribosomal subunit protein uL13 (142 aa).

The protein belongs to the universal ribosomal protein uL13 family. As to quaternary structure, part of the 50S ribosomal subunit.

This protein is one of the early assembly proteins of the 50S ribosomal subunit, although it is not seen to bind rRNA by itself. It is important during the early stages of 50S assembly. This Cellvibrio japonicus (strain Ueda107) (Pseudomonas fluorescens subsp. cellulosa) protein is Large ribosomal subunit protein uL13.